A 189-amino-acid chain; its full sequence is Selenoprotein S (189 aa).

Residues 28–48 traverse the membrane as a helical segment; sequence SLLATYGWYIVFSCILLYVVF. The VCP/p97-interacting motif (VIM) stretch occupies residues 78–90; it reads RQEALAAARLKMQ. Positions 115–189 are disordered; the sequence is KIEMWDSMQE…RRGPSSGGUG (75 aa). A Phosphoserine modification is found at Ser140. Residues 159 to 173 are compositionally biased toward gly residues; it reads RGGGYNPLSGEGGGA. A non-standard amino acid (selenocysteine) is located at residue Sec188.

It belongs to the selenoprotein S family. Interacts with DERL1 and (via VIM motif) with VCP, suggesting that it forms a membrane complex with DERL1 that serves as a receptor for VCP. Also interacts with DERL2, DERL3 and SELENOK. The SELENOK-SELENOS complex interacts with VCP. Interacts with CCDC47. Truncated SELENOS proteins produced by failed UGA/Sec decoding are ubiquitinated by the CRL2(KLHDC2) and CRL2(KLHDC3) complexes, which recognizes the glycine (Gly) at the C-terminus of truncated SELENOS proteins. Truncated SELENOS proteins produced by failed UGA/Sec decoding are also ubiquitinated by the CRL5(KLHDC1) complex.

The protein localises to the endoplasmic reticulum membrane. The protein resides in the cytoplasm. Involved in the degradation process of misfolded endoplasmic reticulum (ER) luminal proteins. Participates in the transfer of misfolded proteins from the ER to the cytosol, where they are destroyed by the proteasome in a ubiquitin-dependent manner. Probably acts by serving as a linker between DERL1, which mediates the retrotranslocation of misfolded proteins into the cytosol, and the ATPase complex VCP, which mediates the translocation and ubiquitination. This chain is Selenoprotein S, found in Homo sapiens (Human).